A 492-amino-acid chain; its full sequence is Aerolysin (492 aa).

The N-terminal stretch at 1 to 21 (MKALKITGLSLIISATLAAQT) is a signal peptide. Cystine bridges form between cysteine 42/cysteine 98 and cysteine 182/cysteine 187. Positions 68-84 (WQISGLANNWVILGPGY) are interaction with host N-linked glycan. Residues 256–288 (YGLSEKVSTKNKFKWPLVGETEVSIEIAANQSW) are part of the transmembrane beta-barrel after proteolytic activation of the toxin and insertion into the host membrane. Residues 346–355 (RWGGNAWHTH) form an interaction with glycans from host GPI-anchor region. The propeptide occupies 446-492 (GSDSKVRRTRSVDGANTGLKLDIPLDAQELAELGFENVTLSVTPARN).

The protein belongs to the aerolysin family. Homodimer in solution; homoheptamer in the host membrane. After binding to GPI-anchored proteins in target membranes and proteolytic removal of the C-terminal propeptide, the protein assembles into a heptameric pre-pore complex. A further conformation change leads to insertion into the host membrane. Proteolytic cleavage and subsequent release of the propeptide trigger a major conformation change, leading to the formation of a heptameric pre-pore that then inserts into the host membrane.

Its subcellular location is the secreted. It localises to the host cell membrane. In terms of biological role, secreted, cytolytic toxin that forms pores in host membranes after proteolytic removal of a C-terminal propeptide, leading to destruction of the membrane permeability barrier and cell death. The pores are formed by transmembrane beta-strands and are approximately 3 nm in diameter. The protein is Aerolysin (aerA) of Aeromonas enteropelogenes (Aeromonas trota).